The following is a 314-amino-acid chain: Porphobilinogen deaminase (314 aa).

Position 249 is an S-(dipyrrolylmethanemethyl)cysteine (Cys-249).

It belongs to the HMBS family. As to quaternary structure, monomer. Dipyrromethane is required as a cofactor.

It carries out the reaction 4 porphobilinogen + H2O = hydroxymethylbilane + 4 NH4(+). The protein operates within porphyrin-containing compound metabolism; protoporphyrin-IX biosynthesis; coproporphyrinogen-III from 5-aminolevulinate: step 2/4. Functionally, tetrapolymerization of the monopyrrole PBG into the hydroxymethylbilane pre-uroporphyrinogen in several discrete steps. In Brucella suis biovar 1 (strain 1330), this protein is Porphobilinogen deaminase.